The primary structure comprises 1348 residues: Phosphoribosylformylglycinamidine synthase (1348 aa).

Residues Gly300 to Asp311 and Ala701 each bind ATP. 4 residues coordinate Mg(2+): Asp702, Glu741, Asn745, and Asp941. Ser943 is a binding site for ATP. The 250-residue stretch at Val1099–Gly1348 folds into the Glutamine amidotransferase type-1 domain. Catalysis depends on Cys1192, which acts as the Nucleophile. Residues His1313 and Glu1315 contribute to the active site.

It in the N-terminal section; belongs to the FGAMS family. In terms of assembly, monomer.

It is found in the cytoplasm. It carries out the reaction N(2)-formyl-N(1)-(5-phospho-beta-D-ribosyl)glycinamide + L-glutamine + ATP + H2O = 2-formamido-N(1)-(5-O-phospho-beta-D-ribosyl)acetamidine + L-glutamate + ADP + phosphate + H(+). Its pathway is purine metabolism; IMP biosynthesis via de novo pathway; 5-amino-1-(5-phospho-D-ribosyl)imidazole from N(2)-formyl-N(1)-(5-phospho-D-ribosyl)glycinamide: step 1/2. Phosphoribosylformylglycinamidine synthase involved in the purines biosynthetic pathway. Catalyzes the ATP-dependent conversion of formylglycinamide ribonucleotide (FGAR) and glutamine to yield formylglycinamidine ribonucleotide (FGAM) and glutamate. This is Phosphoribosylformylglycinamidine synthase from Xanthomonas campestris pv. campestris (strain ATCC 33913 / DSM 3586 / NCPPB 528 / LMG 568 / P 25).